The sequence spans 1370 residues: Insulin-like growth factor 1 receptor (1370 aa).

The first 30 residues, 1–30, serve as a signal peptide directing secretion; the sequence is MKSGSGGGSPTSLWGLVFLSAALSLWPTSG. A disulfide bridge connects residues Cys-33 and Cys-52. Residues Asn-51, Asn-102, and Asn-135 are each glycosylated (N-linked (GlcNAc...) asparagine). 13 cysteine pairs are disulfide-bonded: Cys-150–Cys-178, Cys-182–Cys-205, Cys-192–Cys-211, Cys-215–Cys-224, Cys-219–Cys-230, Cys-231–Cys-239, Cys-235–Cys-248, Cys-251–Cys-260, Cys-264–Cys-276, Cys-282–Cys-303, Cys-307–Cys-321, Cys-324–Cys-328, and Cys-332–Cys-354. An N-linked (GlcNAc...) asparagine glycan is attached at Asn-245. Asn-314 carries an N-linked (GlcNAc...) asparagine glycan. N-linked (GlcNAc...) asparagine glycans are attached at residues Asn-418 and Asn-439. The cysteines at positions 456 and 489 are disulfide-linked. 2 consecutive Fibronectin type-III domains span residues 490–610 and 611–709; these read ESDV…TNAS and VPSI…TEAE. N-linked (GlcNAc...) asparagine glycans are attached at residues Asn-535, Asn-608, Asn-623, Asn-641, Asn-748, Asn-757, Asn-765, Asn-901, and Asn-914. Over 742–936 the chain is Extracellular; the sequence is DVLQVANTTM…AKTTYENFMH (195 aa). Residues 835-928 form the Fibronectin type-III 3 domain; sequence IPGPVTWEPR…DPVFFYVPAK (94 aa). The chain crosses the membrane as a helical span at residues 937-960; the sequence is LIIALPVAILLIVGGLVIMLYVFH. Residues 961 to 1370 lie on the Cytoplasmic side of the membrane; sequence RKRNNSRLGN…ALPLPQSSTC (410 aa). The IRS1- and SHC1-binding motif lies at 978–981; it reads NPEY. At Tyr-981 the chain carries Phosphotyrosine. The Protein kinase domain occupies 1000-1275; the sequence is ITMNRELGQG…SIKDEMEPSF (276 aa). ATP is bound by residues 1006–1014 and Lys-1034; that span reads LGQGSFGMV. Asp-1136 (proton acceptor) is an active-site residue. Phosphotyrosine; by autocatalysis is present on residues Tyr-1162, Tyr-1166, and Tyr-1167. Residues Lys-1169 and Lys-1172 each participate in a glycyl lysine isopeptide (Lys-Gly) (interchain with G-Cter in ubiquitin) cross-link. At Ser-1279 the chain carries Phosphoserine; by GSK3-beta. Phosphoserine is present on Ser-1283. A disordered region spans residues 1304-1370; sequence NMESVPLDPS…ALPLPQSSTC (67 aa). Residues 1305–1321 are compositionally biased toward low complexity; that stretch reads MESVPLDPSASSASLPL. Residues 1322 to 1331 show a composition bias toward basic and acidic residues; it reads PERHSGHKAE.

Belongs to the protein kinase superfamily. Tyr protein kinase family. Insulin receptor subfamily. In terms of assembly, tetramer of 2 alpha and 2 beta chains linked by disulfide bonds. The alpha chains contribute to the formation of the ligand-binding domain, while the beta chain carries the kinase domain. Interacts with PIK3R1 and with the PTB/PID domains of IRS1 and SHC1 in vitro when autophosphorylated on tyrosine residues. Forms a hybrid receptor with INSR, the hybrid is a tetramer consisting of 1 alpha chain and 1 beta chain of INSR and 1 alpha chain and 1 beta chain of IGF1R. Interacts with ARRB1 and ARRB2. Interacts with GRB10. Interacts with RACK1. Interacts with SOCS1, SOCS2 and SOCS3. Interacts with 14-3-3 proteins. Interacts with NMD2. Interacts with MAP3K5. Interacts with STAT3. Found in a ternary complex with IGF1 and ITGAV:ITGB3 or ITGA6:ITGB4. Interacts (nascent precursor form) with ZFAND2B. In terms of processing, autophosphorylated on tyrosine residues in response to ligand binding. Autophosphorylation occurs in trans, i.e. one subunit of the dimeric receptor phosphorylates tyrosine residues on the other subunit. Autophosphorylation occurs in a sequential manner; Tyr-1166 is predominantly phosphorylated first, followed by phosphorylation of Tyr-1162 and Tyr-1167. While every single phosphorylation increases kinase activity, all three tyrosine residues in the kinase activation loop (Tyr-1162, Tyr-1166 and Tyr-1167) have to be phosphorylated for optimal activity. Can be autophosphorylated at additional tyrosine residues (in vitro). Autophosphorylated is followed by phosphorylation of juxtamembrane tyrosines and C-terminal serines. May also be phosphorylated at Tyr-1162 and Tyr-1167 by mTORC2. Phosphorylation of Tyr-981 is required for IRS1- and SHC1-binding. Phosphorylation of Ser-1279 by GSK-3beta restrains kinase activity and promotes cell surface expression, it requires a priming phosphorylation at Ser-1283. Dephosphorylated by PTPN1. Post-translationally, polyubiquitinated at Lys-1169 and Lys-1172 through both 'Lys-48' and 'Lys-29' linkages, promoting receptor endocytosis and subsequent degradation by the proteasome. Ubiquitination is facilitated by pre-existing phosphorylation. Sumoylated with SUMO1. In terms of processing, controlled by regulated intramembrane proteolysis (RIP). Undergoes metalloprotease-dependent constitutive ectodomain shedding to produce a membrane-anchored 52 kDa C-Terminal fragment which is further processed by presenilin gamma-secretase to yield an intracellular 50 kDa fragment.

It localises to the cell membrane. The enzyme catalyses L-tyrosyl-[protein] + ATP = O-phospho-L-tyrosyl-[protein] + ADP + H(+). With respect to regulation, activated by autophosphorylation at Tyr-1162, Tyr-1166 and Tyr-1167 on the kinase activation loop; phosphorylation at all three tyrosine residues is required for optimal kinase activity. Inhibited by MSC1609119A-1, BMS-754807, PQIP, benzimidazole pyridinone, isoquinolinedione, bis-azaindole, 3-cyanoquinoline, 2,4-bis-arylamino-1,3-pyrimidine, pyrrolopyrimidine, pyrrole-5-carboxaldehyde, picropodophyllin (PPP), tyrphostin derivatives. While most inhibitors bind to the ATP binding pocket, MSC1609119A-1 functions as allosteric inhibitor and binds close to the DFG motif and the activation loop. Dephosphorylated by PTPN1. Its function is as follows. Receptor tyrosine kinase which mediates actions of insulin-like growth factor 1 (IGF1). Binds IGF1 with high affinity and IGF2 and insulin (INS) with a lower affinity. The activated IGF1R is involved in cell growth and survival control. IGF1R is crucial for tumor transformation and survival of malignant cell. Ligand binding activates the receptor kinase, leading to receptor autophosphorylation, and tyrosines phosphorylation of multiple substrates, that function as signaling adapter proteins including, the insulin-receptor substrates (IRS1/2), Shc and 14-3-3 proteins. Phosphorylation of IRSs proteins lead to the activation of two main signaling pathways: the PI3K-AKT/PKB pathway and the Ras-MAPK pathway. The result of activating the MAPK pathway is increased cellular proliferation, whereas activating the PI3K pathway inhibits apoptosis and stimulates protein synthesis. Phosphorylated IRS1 can activate the 85 kDa regulatory subunit of PI3K (PIK3R1), leading to activation of several downstream substrates, including protein AKT/PKB. AKT phosphorylation, in turn, enhances protein synthesis through mTOR activation and triggers the antiapoptotic effects of IGFIR through phosphorylation and inactivation of BAD. In parallel to PI3K-driven signaling, recruitment of Grb2/SOS by phosphorylated IRS1 or Shc leads to recruitment of Ras and activation of the ras-MAPK pathway. In addition to these two main signaling pathways IGF1R signals also through the Janus kinase/signal transducer and activator of transcription pathway (JAK/STAT). Phosphorylation of JAK proteins can lead to phosphorylation/activation of signal transducers and activators of transcription (STAT) proteins. In particular activation of STAT3, may be essential for the transforming activity of IGF1R. The JAK/STAT pathway activates gene transcription and may be responsible for the transforming activity. JNK kinases can also be activated by the IGF1R. IGF1 exerts inhibiting activities on JNK activation via phosphorylation and inhibition of MAP3K5/ASK1, which is able to directly associate with the IGF1R. When present in a hybrid receptor with INSR, binds IGF1. The polypeptide is Insulin-like growth factor 1 receptor (Igf1r) (Rattus norvegicus (Rat)).